Reading from the N-terminus, the 407-residue chain is Transmembrane protein 184B (407 aa).

The disordered stretch occupies residues 1–24 (MTVRGAALAPDPASPTTAAASPSI). 7 helical membrane passes run 40–60 (FLMTTAAQAISGFFVWTALLI), 84–104 (ILFIVPIYAFDSWLSLLFFTN), 121–141 (LVIYNFLSLCYEYLGGESSIM), 178–198 (LQFCVVKPLMAVSTVVLQAFG), 214–234 (VTIIYNISVSLALYALFLFYF), 249–269 (FFMVKSVIFLSFWQGMLLAIL), and 290–310 (VAAGYQDFIICVEMFFAALAL). Positions 369–395 (TLEPGPTWRGGAHGLSRSHSLSGARDN) are disordered. 3 positions are modified to phosphoserine: serine 388, serine 402, and serine 403.

The protein belongs to the TMEM184 family.

Its subcellular location is the membrane. May activate the MAP kinase signaling pathway. The chain is Transmembrane protein 184B (TMEM184B) from Bos taurus (Bovine).